A 1061-amino-acid polypeptide reads, in one-letter code: MGKARKHSRGRPSGFVPDYMQAVEPDEFVYSERMNSEASPPLKRRRFGLNGDNNGVSKEVLSLSKMSRSERKNLVHKLKMELQQVRDLSKKIASFSSDTVLLSPYNDHSCSDGPRRPPPENFATFVGSQGKKRPPVRSDKQRNKKGPSRLNVPTSYTVASVMKECETLLNRLWSHKSGWPFRTPVDPVMLNIPDYFNVIKHPMDLGTIRSRLCKGEYSSPLDFAADVRLTFSNSIAYNPPGNQFHTMAQGISKYFESGWKSIEKKIPMSKPPVIPLTSSASLESEIPFEVAPMRKKEAAMNDNKLRVEPAKLVMTDGEKKKLGQDLMALEEDFPQKIADLLREQSGSDGQSGEGEIEIDIEALSDEILFMVRKLLDDYLREKKKSMEKSEPCEMEIVHDSGFSNSPLQPSKGDLQIDEDVDIVGGNDPSVSSHPPLKIEKDAACRNNESSSSSSSSSESGSSSSDSDSCSSSGSETDSIKASKPTSREEKKQPGVGIDKKEDDSNSEKIVVNDSLNELDQLEHTVGEKSTTMDAVVLVPDEETAPPERQISPDSPDKRYRAAFLKNRFADTIMKAREKAFTKGEKGDPEKLRIEREEFEKRLREEKERLQAEAKAAEEARRKAKAEAAEKARREREQEREAARQALQKMEKTVEINEGIRFMEDLQMLRATGTEGDQLPTSMEVMSPKFSEDMLGLGSFKMESNSNPLEHLGLYMKMDEDEDEEEDPPHFSQRKVEDNPFDRSEKQEHSPHRVEGEDQLVSGNEEPVSQEAHDNGDQEDGKPINPNEIERQLENMPEQESGVGDKEEQETEVVDMRKQENEVVDMGVEEVHPLDRSEGRTLSPHRKEREDPRASGNEESVSEKAQDYENQRDEKINQSEREEQLENVLEQESSRDDDTGEQETEVVGVGKELSLDKSEGQTLSPHREEGENQLDCGNEELVSQKTQDNGNQEDEKSINKIEGEEQLANVPEQESRVTEKEEQETGVVDLGEQKSEVVEKGVEENEAVDNGEGVQGTEVSDKGGNETVVDGNGKVETEVVDKAGQKTDLVDQGEEDIDVEID.

2 disordered regions span residues 32-56 (ERMN…NNGV) and 106-152 (NDHS…RLNV). Basic and acidic residues predominate over residues 109–118 (SCSDGPRRPP). Residues 156–262 (YTVASVMKEC…KYFESGWKSI (107 aa)) form the Bromo domain. Residues 304–386 (KLRVEPAKLV…DYLREKKKSM (83 aa)) enclose the NET domain. Disordered regions lie at residues 443–518 (ACRN…LNEL), 538–558 (VPDE…PDKR), 606–645 (KERL…ARQA), and 710–1033 (HLGL…GNGK). The segment covering 448-476 (ESSSSSSSSSESGSSSSDSDSCSSSGSET) has biased composition (low complexity). A compositionally biased stretch (basic and acidic residues) spans 477–506 (DSIKASKPTSREEKKQPGVGIDKKEDDSNS). Positions 588–658 (PEKLRIEREE…MEKTVEINEG (71 aa)) form a coiled coil. 5 stretches are compositionally biased toward basic and acidic residues: residues 733–755 (RKVE…RVEG), 770–792 (EAHD…ERQL), 828–852 (EEVH…EDPR), 860–883 (VSEK…REEQ), and 912–929 (LSLD…REEG). Residues 852–893 (RASGNEESVSEKAQDYENQRDEKINQSEREEQLENVLEQESS) adopt a coiled-coil conformation. Residues 940-949 (LVSQKTQDNG) show a composition bias toward polar residues. 2 stretches are compositionally biased toward basic and acidic residues: residues 952–962 (EDEKSINKIEG) and 990–1002 (GEQK…KGVE).

Interacts with TIP/NAC091. In terms of tissue distribution, widely expressed in all tissues.

Its subcellular location is the nucleus. Acts as a negative regulator in plant response to changes in environmental conditions through the control of ABA-regulated gene expression. In Arabidopsis thaliana (Mouse-ear cress), this protein is Transcription factor GTE10 (GTE10).